We begin with the raw amino-acid sequence, 186 residues long: MTVRDVIQKIEPRMKKTIEAFQHEIASIRTGKATTALLDRVKVEAYGSQMPLKQVGNVGVLDVHTLSVQVWDKSMVGAVERAIRDANLGLNPSADGQTVRISIPPLTEERRKEYVKLTKKFGEDSKVSLRNHRRDLIHELDKLEKEKAISEDDKNHGKKEADDLVHKYEKKITEMIAQKEKEIMEV.

It belongs to the RRF family.

The protein resides in the cytoplasm. Functionally, responsible for the release of ribosomes from messenger RNA at the termination of protein biosynthesis. May increase the efficiency of translation by recycling ribosomes from one round of translation to another. This Chlorobaculum parvum (strain DSM 263 / NCIMB 8327) (Chlorobium vibrioforme subsp. thiosulfatophilum) protein is Ribosome-recycling factor.